The sequence spans 4555 residues: Protocadherin Fat 3 (4555 aa).

The signal sequence occupies residues Met-1 to Gly-31. Over Leu-32 to Glu-4153 the chain is Extracellular. Cadherin domains lie at Thr-43–Phe-157, Ser-158–Ile-265, Pro-263–Lys-374, Glu-376–Phe-471, Gln-472–Phe-577, Glu-578–Phe-680, Lys-726–Phe-830, Leu-831–Phe-935, Ile-936–Phe-1042, Pro-1043–Thr-1147, Ser-1148–Phe-1253, Pro-1254–Pro-1358, Asp-1362–Phe-1459, Ser-1460–Phe-1565, Thr-1566–Phe-1768, Leu-1769–Phe-1882, Thr-1883–Phe-1985, Thr-1982–Phe-2083, Val-2084–Phe-2185, Asp-2186–Phe-2286, Asp-2287–Phe-2393, Asn-2394–Phe-2495, Ser-2496–Phe-2599, Met-2600–Phe-2707, Thr-2708–Phe-2813, Glu-2814–Phe-2923, Ala-2924–Cys-3028, Asp-3029–Phe-3130, Ser-3131–Phe-3235, Glu-3236–Phe-3340, Ser-3341–Phe-3445, Thr-3446–Ala-3550, and Ile-3551–Phe-3652. A glycan (N-linked (GlcNAc...) asparagine) is linked at Asn-48. N-linked (GlcNAc...) asparagine glycosylation is present at Asn-341. N-linked (GlcNAc...) asparagine glycans are attached at residues Asn-481, Asn-562, Asn-667, Asn-799, Asn-879, Asn-898, and Asn-1006. N-linked (GlcNAc...) asparagine glycosylation is found at Asn-1367 and Asn-1429. A glycan (N-linked (GlcNAc...) asparagine) is linked at Asn-1751. N-linked (GlcNAc...) asparagine glycans are attached at residues Asn-1944, Asn-1993, and Asn-1996. 4 N-linked (GlcNAc...) asparagine glycosylation sites follow: Asn-2208, Asn-2292, Asn-2331, and Asn-2467. An N-linked (GlcNAc...) asparagine glycan is attached at Asn-2734. N-linked (GlcNAc...) asparagine glycosylation is present at Asn-3000. The N-linked (GlcNAc...) asparagine glycan is linked to Asn-3201. 3 N-linked (GlcNAc...) asparagine glycosylation sites follow: Asn-3449, Asn-3618, and Asn-3741. Positions Ser-3794 to Ser-3832 constitute an EGF-like 1 domain. 3 disulfide bridges follow: Cys-3798-Cys-3809, Cys-3803-Cys-3821, and Cys-3823-Cys-3831. The Laminin G-like domain occupies His-3834–Cys-4017. N-linked (GlcNAc...) asparagine glycosylation occurs at Asn-3926. 10 disulfides stabilise this stretch: Cys-3984–Cys-4017, Cys-4024–Cys-4035, Cys-4029–Cys-4045, Cys-4047–Cys-4056, Cys-4063–Cys-4074, Cys-4068–Cys-4083, Cys-4085–Cys-4094, Cys-4101–Cys-4112, Cys-4106–Cys-4121, and Cys-4123–Cys-4132. 2 EGF-like domains span residues Tyr-4020 to Glu-4057 and Glu-4059 to Glu-4095. In terms of domain architecture, EGF-like 4; calcium-binding spans Asp-4097–Gly-4133. Residues Leu-4154–Phe-4174 traverse the membrane as a helical segment. Residues Arg-4175–Val-4555 lie on the Cytoplasmic side of the membrane. Over residues Ser-4326–Asp-4343 the composition is skewed to polar residues. Disordered stretches follow at residues Ser-4326 to Asp-4347, Gly-4395 to Asp-4424, and Pro-4452 to Gly-4472. Residues Arg-4508 and Arg-4518 each carry the omega-N-methylarginine modification.

As to expression, restricted to the nervous system. Abundantly expressed in the fetal brain.

The protein localises to the membrane. In terms of biological role, may play a role in the interactions between neurites derived from specific subsets of neurons during development. This chain is Protocadherin Fat 3 (Fat3), found in Rattus norvegicus (Rat).